Reading from the N-terminus, the 567-residue chain is PEX5-related protein (567 aa).

Positions 56–105 are disordered; it reads SEPVSQPQTKAKKSEPSSKSSSLKKKADGSDLISADAEQRAQALRGPETS. Position 146 is a phosphoserine (serine 146). The interval 150 to 169 is disordered; that stretch reads LWSAEHRSQPELSTGKSALN. Serine 194, serine 198, and serine 202 each carry phosphoserine. 3 TPR repeats span residues 267–300, 301–334, and 336–368; these read WPGA…DPGD, AEAW…QPNN, and KALM…NPKY. A phosphoserine mark is found at serine 386 and serine 388. TPR repeat units follow at residues 415–448, 450–482, and 484–516; these read PDLQ…RPED, SLWN…QPGF, and RSRY…QRKS.

It belongs to the peroxisomal targeting signal receptor family. As to quaternary structure, interacts with RAB8B. Forms an obligate 4:4 complex with HCN2. Interacts with HCN3. Interacts with HCN4 with a 4:4 HCN4:PEX5L stoichiometry; reduces the effects of cAMP on the voltage-dependence and rate of activation of HCN4.

Its subcellular location is the cytoplasm. It localises to the membrane. Accessory subunit of hyperpolarization-activated cyclic nucleotide-gated (HCN) channels, regulating their cell-surface expression and cyclic nucleotide dependence. The protein is PEX5-related protein (Pex5l) of Mus musculus (Mouse).